Consider the following 1273-residue polypeptide: Receptor-type tyrosine-protein phosphatase C (1273 aa).

The signal sequence occupies residues 1 to 23 (MYLWLKLLAFSLALLGPEVFVTG). The Extracellular segment spans residues 24-546 (QGTTDDGLDT…KPQSTSYNSK (523 aa)). The segment at 45-192 (LPARTTEFTP…TEIATPQTKP (148 aa)) is disordered. Composition is skewed to polar residues over residues 50-77 (TEFT…SSTL), 84-111 (QPDS…TLTA), and 141-192 (RNST…QTKP). N-linked (GlcNAc...) asparagine glycosylation is present at Asn62. Residues Asn142, Asn153, Asn164, Asn178, Asn200, Asn245, Asn250, Asn271, Asn282, Asn327, Asn333, Asn371, Asn374, Asn471, and Asn502 are each glycosylated (N-linked (GlcNAc...) asparagine). Fibronectin type-III domains lie at 361-452 (PEML…TKAA) and 453-545 (RPGK…SYNS). Residues 547-567 (ALIIFLVFLIIVTSIALLVVL) traverse the membrane as a helical segment. The Cytoplasmic portion of the chain corresponds to 568 to 1273 (YKIYDLRKKR…PMSPALTPSS (706 aa)). Tyrosine-protein phosphatase domains are found at residues 622–881 (FLAE…LVEY) and 913–1196 (LEAE…MASI). Tyr652 carries the post-translational modification Phosphotyrosine. Substrate contacts are provided by residues Asp790, 822–828 (CSAGVGR), and Gln866. The active-site Phosphocysteine intermediate is the Cys822. 7 positions are modified to phosphoserine: Ser944, Ser963, Ser966, Ser970, Ser973, Ser974, and Ser978. The segment at 960-984 (LEMSKESEAESDESSDEDSDSEETS) is disordered. Positions 968 to 981 (AESDESSDEDSDSE) are enriched in acidic residues. The active-site Phosphocysteine intermediate is Cys1137. Phosphoserine occurs at positions 1209 and 1266. A disordered region spans residues 1219-1273 (VDGAKQDANCVQPADPLNKAQEDSKEVGASEPASGSEEPEHSANGPMSPALTPSS).

The protein belongs to the protein-tyrosine phosphatase family. Receptor class 1/6 subfamily. As to quaternary structure, interacts with SKAP1. Interacts with DPP4; the interaction is enhanced in an interleukin-12-dependent manner in activated lymphocytes. Binds GANAB and PRKCSH. Interacts with CD53; this interaction stabilizes PTPRC on the membrane and is required for optimal phosphatase activity. Interacts with CLEC10A. In terms of processing, heavily N- and O-glycosylated. The cytoplasmic domain contains potential phosphorylation sites. In terms of tissue distribution, isoform 1 and isoform 2 are found in thymocyte and lymph node. Isoform 4 and isoform 3 are found in the lymph nod.

Its subcellular location is the cell membrane. The protein resides in the membrane raft. It is found in the synapse. The catalysed reaction is O-phospho-L-tyrosyl-[protein] + H2O = L-tyrosyl-[protein] + phosphate. Its function is as follows. Protein tyrosine-protein phosphatase required for T-cell activation through the antigen receptor. Acts as a positive regulator of T-cell coactivation upon binding to DPP4. The first PTPase domain has enzymatic activity, while the second one seems to affect the substrate specificity of the first one. Upon T-cell activation, recruits and dephosphorylates SKAP1 and FYN. Dephosphorylates LYN, and thereby modulates LYN activity. Interacts with CLEC10A at antigen presenting cell-T cell contact; CLEC10A on immature dendritic cells recognizes Tn antigen-carrying PTPRC/CD45 receptor on effector T cells and modulates T cell activation threshold to limit autoreactivity. In Rattus norvegicus (Rat), this protein is Receptor-type tyrosine-protein phosphatase C (Ptprc).